The following is a 1082-amino-acid chain: uncharacterized protein (1082 aa).

Residues 50–319 (TTMTGGVSLA…LDNRPIGVLF (270 aa)) form the PNPLA domain. The GXSXG signature appears at 120-124 (GTSAG). The Nucleophile role is filled by Ser122. The active-site Proton acceptor is Asp306. Residues 306 to 308 (DGG) carry the DGA/G motif. 4 helical membrane passes run 959-979 (IARSTIIAGALLLVLGVAAAI), 982-1002 (VTVFGVTGLIAAGTGGLLVVL), 1012-1032 (LFALLSFSVVGAVLALATPVV), and 1057-1077 (WWHPLVVVGLIALVAIMIAAA).

The protein localises to the cell membrane. This is an uncharacterized protein from Mycobacterium tuberculosis (strain ATCC 25618 / H37Rv).